Reading from the N-terminus, the 119-residue chain is Large ribosomal subunit protein bL20 (119 aa).

The protein belongs to the bacterial ribosomal protein bL20 family.

In terms of biological role, binds directly to 23S ribosomal RNA and is necessary for the in vitro assembly process of the 50S ribosomal subunit. It is not involved in the protein synthesizing functions of that subunit. In Rhodospirillum centenum (strain ATCC 51521 / SW), this protein is Large ribosomal subunit protein bL20.